The following is a 197-amino-acid chain: Protein FAM219B (197 aa).

Disordered regions lie at residues 1-77 (MATE…HRDH) and 117-142 (DENL…YSSA). A phosphoserine mark is found at Ser14, Ser125, and Ser127.

It belongs to the FAM219 family.

This Mus musculus (Mouse) protein is Protein FAM219B (Fam219b).